A 1426-amino-acid chain; its full sequence is Protein RhsD (1426 aa).

The tract at residues 256–285 (AEEARTSSLSSSDSSRPLSASAFPDTLPGT) is disordered. Positions 262 to 277 (SSLSSSDSSRPLSASA) are enriched in low complexity. The 28 X approximate tandem repeats stretch occupies residues 320–1197 (YTEAGELLAV…LNEENPHHVY (878 aa)). 27 tandem repeats follow at residues 334–356 (NTQVRAFTYDAQHPGRMVAHRYA), 357–378 (GRPEMRYRYDDTGRVVEQLNPA), 379–421 (GLSY…ELAD), 422–442 (GSVTRSGYDAAGRLTAQTDAA), 443–464 (GRRTEYGLNVVSGDITDITTPD), 465–485 (GRETKFYYNDGNQLTAVVSPD), 486–506 (GLESRREYDEPGRLVSETSRS), 507–529 (GETVRYRYDDAHSELPATTTDAT), 530–550 (GSTRQMTWSRYGQLLAFTDCS), 551–571 (GYQTRYEYDRFGQMTAVHREE), 572–592 (GISLYRRYDNRGRLTSVKDAQ), 593–613 (GRETRYEYNAAGDLTAVITPD), 614–633 (GNRSETQYDAWGKAVSTTQG), 634–654 (GLTRSMEYDAAGRVISLTNEN), 655–675 (GSHSVFSYDALDRLVQQGGFD), 676–695 (GRTQRYHYDLTGKLTQSEDE), 696–715 (GLVILWYYDESDRITHRTVN), 716–738 (GEPAEQWQYDGHGWLTDISHLSE), 739–762 (GHRVAVHYGYDDKGRLTGECQTVE), 812–832 (GGTPLVEYTRDRLHRETVRSF), 833–861 (GSMAGSNAAYELTSTYTPAGQLQSQHLNS), 862–882 (LVYDRDYGWSDNGDLVRISGP), 883–905 (RQTREYGYSATGRLESVRTLAPD), 906–941 (LDIRIPYATDPAGNRLPDPELHPDSTLTVWPDNRIA), 942–970 (EDAHYVYRHDEYGRLTEKTDRIPAGVIRT), 971–995 (DDERTHHYHYDSQHRLVFYTRIQHG), and 996–1030 (EPLVESRYLYDPLGRRMAKRVWRRERDLTGWMSLS). Basic and acidic residues predominate over residues 1073 to 1085 (ENGEREKAQRRSL). Residues 1073-1097 (ENGEREKAQRRSLAETLQQEGSENG) are disordered. The stretch at 1173–1197 (GNTAWSAEYDEWGNQLNEENPHHVY) is repeat 28.

Belongs to the RHS family.

Rhs elements have a nonessential function. They may play an important role in the natural ecology of the cell. This is Protein RhsD (rhsD) from Escherichia coli (strain K12).